The chain runs to 364 residues: Zinc finger protein CONSTANS-LIKE 12 (364 aa).

Cys5, Cys8, Cys28, and His33 together coordinate Zn(2+). A B box-type 1; atypical zinc finger spans residues 5 to 47 (CDHCATSQALIYCKSDLAKLCLNCDVHVHSANPLSHRHIRSLI). The B box-type 2; degenerate zinc-finger motif lies at 48-88 (CEKCFSQPAAIRCLDEKVSYCQGCHWHESNCSELGHRVQSL). Positions 280-322 (QDCGMSPGFIMSEAPWETNFEVSCPQARNEAKLRYKEKKLKRS) constitute a CCT domain.

It belongs to the CONSTANS family.

It is found in the nucleus. This chain is Zinc finger protein CONSTANS-LIKE 12 (COL12), found in Arabidopsis thaliana (Mouse-ear cress).